A 570-amino-acid chain; its full sequence is Urease subunit alpha (570 aa).

Residues 131-570 (GGMDSHIHFI…LPMAQRYFLF (440 aa)) enclose the Urease domain. Positions 136, 138, and 219 each coordinate Ni(2+). Residue Lys219 is modified to N6-carboxylysine. A substrate-binding site is contributed by His221. Residues His248 and His274 each contribute to the Ni(2+) site. The active-site Proton donor is the His322. Asp362 provides a ligand contact to Ni(2+).

Belongs to the metallo-dependent hydrolases superfamily. Urease alpha subunit family. In terms of assembly, heterotrimer of UreA (gamma), UreB (beta) and UreC (alpha) subunits. Three heterotrimers associate to form the active enzyme. Ni cation serves as cofactor. Carboxylation allows a single lysine to coordinate two nickel ions.

It localises to the cytoplasm. The enzyme catalyses urea + 2 H2O + H(+) = hydrogencarbonate + 2 NH4(+). Its pathway is nitrogen metabolism; urea degradation; CO(2) and NH(3) from urea (urease route): step 1/1. This chain is Urease subunit alpha, found in Rhizobium leguminosarum bv. trifolii (strain WSM2304).